Here is a 396-residue protein sequence, read N- to C-terminus: MAEKRDYYEVLEVTKTATVEEIKKAYRKKAIQYHPDKNPGDKEAEEKFKEAAEAYDVLSNPDKRSRYDQFGHAGVSGAAGNGGPFGGFGGEGMSMDDIFSMFGDIFGGRGGGFSGGFGGFSGFGGGGGGSQQRRYRGSDLRVKVKMTLKEISTGVEKKFKLKKYVPCNHCHGTGAEGDGGSETCPTCKGSGSVIRNQQTILGTMQTRTTCPTCNGEGKIIKNKCKECGGDGIVYGEEVVTVKIPAGVAEGMQLSMGGKGNAGKHNGVPGDLLILVEEEPHPDLIRDENDLIYNLLLSFPTAALGGAVEIPTIDGKVKVKIDSGTQPGKVLRLRGKGLPNVNGYGTGDLLVNISIYVPEALNKEEKSTLEKMEASDNFKPSTSVKEKIFKKFKSFFD.

Residues 6–71 form the J domain; it reads DYYEVLEVTK…DKRSRYDQFG (66 aa). The segment at 154–236 adopts a CR-type zinc-finger fold; that stretch reads GVEKKFKLKK…CGGDGIVYGE (83 aa). Zn(2+) is bound by residues C167, C170, C184, C187, C210, C213, C224, and C227. CXXCXGXG motif repeat units follow at residues 167-174, 184-191, 210-217, and 224-231; these read CNHCHGTG, CPTCKGSG, CPTCNGEG, and CKECGGDG.

Belongs to the DnaJ family. In terms of assembly, homodimer. Zn(2+) serves as cofactor.

It is found in the cytoplasm. Participates actively in the response to hyperosmotic and heat shock by preventing the aggregation of stress-denatured proteins and by disaggregating proteins, also in an autonomous, DnaK-independent fashion. Unfolded proteins bind initially to DnaJ; upon interaction with the DnaJ-bound protein, DnaK hydrolyzes its bound ATP, resulting in the formation of a stable complex. GrpE releases ADP from DnaK; ATP binding to DnaK triggers the release of the substrate protein, thus completing the reaction cycle. Several rounds of ATP-dependent interactions between DnaJ, DnaK and GrpE are required for fully efficient folding. Also involved, together with DnaK and GrpE, in the DNA replication of plasmids through activation of initiation proteins. The sequence is that of Chaperone protein DnaJ from Bacteroides thetaiotaomicron (strain ATCC 29148 / DSM 2079 / JCM 5827 / CCUG 10774 / NCTC 10582 / VPI-5482 / E50).